We begin with the raw amino-acid sequence, 475 residues long: Aspartyl/glutamyl-tRNA(Asn/Gln) amidotransferase subunit B (475 aa).

This sequence belongs to the GatB/GatE family. GatB subfamily. In terms of assembly, heterotrimer of A, B and C subunits.

It catalyses the reaction L-glutamyl-tRNA(Gln) + L-glutamine + ATP + H2O = L-glutaminyl-tRNA(Gln) + L-glutamate + ADP + phosphate + H(+). The catalysed reaction is L-aspartyl-tRNA(Asn) + L-glutamine + ATP + H2O = L-asparaginyl-tRNA(Asn) + L-glutamate + ADP + phosphate + 2 H(+). In terms of biological role, allows the formation of correctly charged Asn-tRNA(Asn) or Gln-tRNA(Gln) through the transamidation of misacylated Asp-tRNA(Asn) or Glu-tRNA(Gln) in organisms which lack either or both of asparaginyl-tRNA or glutaminyl-tRNA synthetases. The reaction takes place in the presence of glutamine and ATP through an activated phospho-Asp-tRNA(Asn) or phospho-Glu-tRNA(Gln). The protein is Aspartyl/glutamyl-tRNA(Asn/Gln) amidotransferase subunit B of Chlorobium luteolum (strain DSM 273 / BCRC 81028 / 2530) (Pelodictyon luteolum).